The sequence spans 575 residues: Intermediate filament protein ifa-1 (575 aa).

Disordered stretches follow at residues 1 to 30 (MMEI…TGNV) and 45 to 72 (SGAG…EKKE). The segment at 1–72 (MMEITRETMS…RDSREREKKE (72 aa)) is head. The span at 7 to 17 (ETMSFTSTTPS) shows a compositional bias: polar residues. The segment covering 63 to 72 (RDSREREKKE) has biased composition (basic and acidic residues). The 354-residue stretch at 69–422 (EKKEMSDLND…KMLEGEENRA (354 aa)) folds into the IF rod domain. The interval 73 to 104 (MSDLNDRLASYIEKVRFLEAQNRKLAADLDAL) is coil 1A. The interval 105–118 (RSKWGKDTHNIRNM) is linker 1. The interval 119 to 256 (YEGELVDAQK…RVHDNEIKEL (138 aa)) is coil 1B. The interval 257–274 (QTLASRDTTPENREFFKN) is linker 12. The tract at residues 275–422 (ELSSAIRDIR…KMLEGEENRA (148 aa)) is coil 2. The segment at 423 to 572 (GLKQLVEQVV…EERATHIQRQ (150 aa)) is tail. One can recognise an LTD domain in the interval 455 to 572 (SRQSFQRSAK…EERATHIQRQ (118 aa)).

This sequence belongs to the intermediate filament family. Forms some heteromeric filaments with ifb-1. Isoform d is abundantly expressed in the marginal cells of the pharynx, forming apicobasally oriented thick filament bundles that are attached to the apical and basal plasma membrane by hemi-adherens junctions. Expression of isoform c is also seen in the excretory cells and in the uterus. Isoform c is detectable in the amphid sensory neurins and the pharyngeal-intestinal valve. Both isoform c and isoform d are expressed in the rectum and vulva and in some neurons of the tail. In larvae, expression is seen in the excretory cell, the vulva, the rectum and in the thick filament bundles of the pharynx. Expression in pharynx begins in late embryos.

It is found in the cytoplasm. Its function is as follows. Cytoplasmic intermediate filaments make up the structural component of the cytoskeleton providing mechanical strength to cells. Essential protein required during embryogenesis especially for survival past the L1 larva stage, involved in intestine morphogenesis. This chain is Intermediate filament protein ifa-1 (ifa-1), found in Caenorhabditis elegans.